Reading from the N-terminus, the 214-residue chain is Phosphatidylserine decarboxylase proenzyme (214 aa).

Ser183 functions as the Schiff-base intermediate with substrate; via pyruvic acid in the catalytic mechanism. Position 183 is a pyruvic acid (Ser); by autocatalysis (Ser183).

The protein belongs to the phosphatidylserine decarboxylase family. PSD-A subfamily. Heterodimer of a large membrane-associated beta subunit and a small pyruvoyl-containing alpha subunit. It depends on pyruvate as a cofactor. In terms of processing, is synthesized initially as an inactive proenzyme. Formation of the active enzyme involves a self-maturation process in which the active site pyruvoyl group is generated from an internal serine residue via an autocatalytic post-translational modification. Two non-identical subunits are generated from the proenzyme in this reaction, and the pyruvate is formed at the N-terminus of the alpha chain, which is derived from the carboxyl end of the proenzyme. The post-translation cleavage follows an unusual pathway, termed non-hydrolytic serinolysis, in which the side chain hydroxyl group of the serine supplies its oxygen atom to form the C-terminus of the beta chain, while the remainder of the serine residue undergoes an oxidative deamination to produce ammonia and the pyruvoyl prosthetic group on the alpha chain.

The protein resides in the cell membrane. The enzyme catalyses a 1,2-diacyl-sn-glycero-3-phospho-L-serine + H(+) = a 1,2-diacyl-sn-glycero-3-phosphoethanolamine + CO2. It participates in phospholipid metabolism; phosphatidylethanolamine biosynthesis; phosphatidylethanolamine from CDP-diacylglycerol: step 2/2. Catalyzes the formation of phosphatidylethanolamine (PtdEtn) from phosphatidylserine (PtdSer). This Syntrophotalea carbinolica (strain DSM 2380 / NBRC 103641 / GraBd1) (Pelobacter carbinolicus) protein is Phosphatidylserine decarboxylase proenzyme.